The following is a 404-amino-acid chain: Glucose-1-phosphate adenylyltransferase (404 aa).

Alpha-D-glucose 1-phosphate contacts are provided by residues Tyr99, Gly164, 179-180, and Ser197; that span reads EK.

This sequence belongs to the bacterial/plant glucose-1-phosphate adenylyltransferase family.

The enzyme catalyses alpha-D-glucose 1-phosphate + ATP + H(+) = ADP-alpha-D-glucose + diphosphate. It participates in capsule biogenesis; capsule polysaccharide biosynthesis. The protein operates within glycan biosynthesis; glycogen biosynthesis. Functionally, involved in the biosynthesis of ADP-glucose, a building block, required in the biosynthesis of maltose-1-phosphate (M1P) and in the elongation reactions to produce linear alpha-1,4-glucans. Catalyzes the reaction between ATP and alpha-D-glucose 1-phosphate (G1P) to produce pyrophosphate and ADP-Glc. The sequence is that of Glucose-1-phosphate adenylyltransferase from Mycobacterium bovis (strain ATCC BAA-935 / AF2122/97).